A 624-amino-acid polypeptide reads, in one-letter code: Protein POLLEN DEFECTIVE IN GUIDANCE 1 (624 aa).

The interval Ser-20–Gln-63 is disordered. Positions Ser-33 to Ser-42 are enriched in polar residues. The segment covering Gly-49–Val-61 has biased composition (basic residues). 6 helical membrane-spanning segments follow: residues Val-263–Met-283, Ala-305–Gly-325, Phe-391–Ala-411, Ala-413–Ser-433, Leu-545–Ala-565, and Leu-578–Ile-598.

Belongs to the TAPT1 family. As to quaternary structure, interacts with CRT3, but not with CRT1 or CNX. As to expression, expressed in inflorescences, siliques, roots and shoots. Expressed in early embryo, endosperm, mature pollen and pollen tubes, synergide cells and weakly in antipodal cells.

It is found in the membrane. It localises to the endoplasmic reticulum lumen. In terms of biological role, probable component of the calreticulin 3 (CRT3) complex, acting probably as a co-chaperone involved in protein retention in the endoplasmic reticulum lumen. Required for micropylar pollen tube guidance. Plays an essential role in cell plate orientation or positioning in early embryo patterning. This Arabidopsis thaliana (Mouse-ear cress) protein is Protein POLLEN DEFECTIVE IN GUIDANCE 1 (POD1).